The sequence spans 513 residues: Pantetheinase (513 aa).

An N-terminal signal peptide occupies residues 1–22; sequence MITSPLLAYVAILFFCVLKASS. In terms of domain architecture, CN hydrolase spans 40–307; the sequence is APLTPVSHEE…GKLLLSQLDS (268 aa). Catalysis depends on Glu-80, which acts as the Proton acceptor. N-linked (GlcNAc...) asparagine glycosylation occurs at Asn-147. The active-site Proton donor is Lys-179. Cys-212 acts as the Nucleophile in catalysis. N-linked (GlcNAc...) asparagine glycans are attached at residues Asn-315 and Asn-353. Gly-487 carries GPI-anchor amidated glycine lipidation. Residues 488–513 constitute a propeptide, removed in mature form; the sequence is ASADLVAQGLRVMLGVIITIMYSLSW.

It belongs to the carbon-nitrogen hydrolase superfamily. BTD/VNN family. Monomer. As to expression, detected in kidney (at protein level).

The protein resides in the cell membrane. It catalyses the reaction (R)-pantetheine + H2O = cysteamine + (R)-pantothenate. Functionally, amidohydrolase that hydrolyzes specifically one of the carboamide linkages in D-pantetheine thus recycling pantothenic acid (vitamin B5) and releasing cysteamine. The polypeptide is Pantetheinase (VNN1) (Sus scrofa (Pig)).